The following is a 264-amino-acid chain: MSQTETQDLLTIAGRDYRSRLLVGTGKYKDLDETRAAVEASGAEIITVAIRRTNIGQNPGEPNLLDVLPPDRYTYLPNTAGCYSAEDAVRTCRLARELLDGHTLVKLEVLGDEKTLYPDVVQTLAAAETLVKDGFQVMVYTSDDPILAKRLEEIGCVAVMPLAAPIGSGLGIQNRYNILEIVENAQVPILVDAGVGTASDAAIAMELGCDGVLMNTAIAAAKNPVLMASAMKKAIEAGREAFLAGRMPRKRYASASSPVEGTFF.

Catalysis depends on Lys106, which acts as the Schiff-base intermediate with DXP. 1-deoxy-D-xylulose 5-phosphate contacts are provided by residues Gly167, Ala193–Gly194, and Asn215–Thr216.

It belongs to the ThiG family. Homotetramer. Forms heterodimers with either ThiH or ThiS.

Its subcellular location is the cytoplasm. It carries out the reaction [ThiS sulfur-carrier protein]-C-terminal-Gly-aminoethanethioate + 2-iminoacetate + 1-deoxy-D-xylulose 5-phosphate = [ThiS sulfur-carrier protein]-C-terminal Gly-Gly + 2-[(2R,5Z)-2-carboxy-4-methylthiazol-5(2H)-ylidene]ethyl phosphate + 2 H2O + H(+). It functions in the pathway cofactor biosynthesis; thiamine diphosphate biosynthesis. Catalyzes the rearrangement of 1-deoxy-D-xylulose 5-phosphate (DXP) to produce the thiazole phosphate moiety of thiamine. Sulfur is provided by the thiocarboxylate moiety of the carrier protein ThiS. In vitro, sulfur can be provided by H(2)S. The protein is Thiazole synthase of Thioalkalivibrio sulfidiphilus (strain HL-EbGR7).